The following is a 331-amino-acid chain: Ketol-acid reductoisomerase (NADP(+)) (331 aa).

One can recognise a KARI N-terminal Rossmann domain in the interval Ala2 to Thr182. NADP(+) contacts are provided by residues Tyr25 to Gln28, Ser51, Ser53, and Asp83 to Gln86. His108 is an active-site residue. Gly134 provides a ligand contact to NADP(+). A KARI C-terminal knotted domain is found at Asn183–Leu328. Positions 191, 195, 227, and 231 each coordinate Mg(2+). Residue Ser252 participates in substrate binding.

It belongs to the ketol-acid reductoisomerase family. It depends on Mg(2+) as a cofactor.

It carries out the reaction (2R)-2,3-dihydroxy-3-methylbutanoate + NADP(+) = (2S)-2-acetolactate + NADPH + H(+). The enzyme catalyses (2R,3R)-2,3-dihydroxy-3-methylpentanoate + NADP(+) = (S)-2-ethyl-2-hydroxy-3-oxobutanoate + NADPH + H(+). It functions in the pathway amino-acid biosynthesis; L-isoleucine biosynthesis; L-isoleucine from 2-oxobutanoate: step 2/4. The protein operates within amino-acid biosynthesis; L-valine biosynthesis; L-valine from pyruvate: step 2/4. Functionally, involved in the biosynthesis of branched-chain amino acids (BCAA). Catalyzes an alkyl-migration followed by a ketol-acid reduction of (S)-2-acetolactate (S2AL) to yield (R)-2,3-dihydroxy-isovalerate. In the isomerase reaction, S2AL is rearranged via a Mg-dependent methyl migration to produce 3-hydroxy-3-methyl-2-ketobutyrate (HMKB). In the reductase reaction, this 2-ketoacid undergoes a metal-dependent reduction by NADPH to yield (R)-2,3-dihydroxy-isovalerate. The polypeptide is Ketol-acid reductoisomerase (NADP(+)) (Synechococcus sp. (strain WH7803)).